A 46-amino-acid polypeptide reads, in one-letter code: Phoratoxin (46 aa).

3 disulfide bridges follow: Cys3–Cys40, Cys4–Cys32, and Cys16–Cys26. A Blocked carboxyl end (His) modification is found at His46.

Belongs to the plant thionin (TC 1.C.44) family.

It localises to the secreted. Functionally, thionins are small plant proteins which are toxic to animal cells. They seem to exert their toxic effect at the level of the cell membrane. Their precise function is not known. The sequence is that of Phoratoxin from Phoradendron leucarpum subsp. tomentosum (California mistletoe).